The following is a 320-amino-acid chain: MPTQPVVRIGARGSKLSLTQSGIVQRRIAAALGVDPDNAAEVERVAPLIPITTTGDRVQDRRLLEIGGKGLFTKEIEEALMDGRIDCAVHSMKDMPAELPEGLCIAAIPEREDPRDAFISRGPERLEDLTEGAILGTASLRRQAQCLHRRPDLEAKLLRGNVETRLGKLEAGEYDAILLAYSGLRRLGLGHLPKSLIDPKEAPPAPGQGALAVETRAADRDLPWAQALRCRPTTLAVAAERGALIALEGSCRTPIGAHAWLEGGTCKLIVEALSPDGKLRFRHSGEAELSQMADPEASARDLGLSLGLAVKEEAGDAIVL.

Position 251 is an S-(dipyrrolylmethanemethyl)cysteine (cysteine 251).

This sequence belongs to the HMBS family. In terms of assembly, monomer. Dipyrromethane is required as a cofactor.

The catalysed reaction is 4 porphobilinogen + H2O = hydroxymethylbilane + 4 NH4(+). It participates in porphyrin-containing compound metabolism; protoporphyrin-IX biosynthesis; coproporphyrinogen-III from 5-aminolevulinate: step 2/4. Tetrapolymerization of the monopyrrole PBG into the hydroxymethylbilane pre-uroporphyrinogen in several discrete steps. This is Porphobilinogen deaminase from Phenylobacterium zucineum (strain HLK1).